The primary structure comprises 396 residues: Tryptophan synthase beta chain (396 aa).

At lysine 88 the chain carries N6-(pyridoxal phosphate)lysine.

This sequence belongs to the TrpB family. In terms of assembly, tetramer of two alpha and two beta chains. It depends on pyridoxal 5'-phosphate as a cofactor.

The catalysed reaction is (1S,2R)-1-C-(indol-3-yl)glycerol 3-phosphate + L-serine = D-glyceraldehyde 3-phosphate + L-tryptophan + H2O. Its pathway is amino-acid biosynthesis; L-tryptophan biosynthesis; L-tryptophan from chorismate: step 5/5. In terms of biological role, the beta subunit is responsible for the synthesis of L-tryptophan from indole and L-serine. This Shewanella oneidensis (strain ATCC 700550 / JCM 31522 / CIP 106686 / LMG 19005 / NCIMB 14063 / MR-1) protein is Tryptophan synthase beta chain.